The following is a 285-amino-acid chain: 4-diphosphocytidyl-2-C-methyl-D-erythritol kinase (285 aa).

The active site involves K10. An ATP-binding site is contributed by 92 to 102; that stretch reads PFGAGLGGGSS. D134 is a catalytic residue.

Belongs to the GHMP kinase family. IspE subfamily.

It carries out the reaction 4-CDP-2-C-methyl-D-erythritol + ATP = 4-CDP-2-C-methyl-D-erythritol 2-phosphate + ADP + H(+). It functions in the pathway isoprenoid biosynthesis; isopentenyl diphosphate biosynthesis via DXP pathway; isopentenyl diphosphate from 1-deoxy-D-xylulose 5-phosphate: step 3/6. Its function is as follows. Catalyzes the phosphorylation of the position 2 hydroxy group of 4-diphosphocytidyl-2C-methyl-D-erythritol. This Chloroherpeton thalassium (strain ATCC 35110 / GB-78) protein is 4-diphosphocytidyl-2-C-methyl-D-erythritol kinase.